Reading from the N-terminus, the 298-residue chain is MKPRHFVTLRDLSSAEFRALIARAIDLKARKEPYEPLKNKVLGMVFEKSSTRTRVSFEVGMAQFGGSSIFLSPRDTQLGRGEPIEDSARVLSRMVDCIMLRTHAHRTVEIFAEYSRVPVINGLTDRFHPCQLLADMQTYFEHRGDIAGKTVAWIGDGNNMCQTYVHAAGLLDFRLRIACPPGYEPEAELVEAAGKCVEVGHDVRTAVNGADLVVTDVWASMGQESEQTERTGAFRDYQVNAALMALAHADALFMHCLPAHRGEEVSAEVLEGPQSVVWDEAENRLHAQKALLEFLLTA.

Carbamoyl phosphate-binding positions include 50–53 (STRT), Gln-77, Arg-101, and 128–131 (HPCQ). L-ornithine-binding positions include Asn-159, Asp-216, and 220–221 (SM). Carbamoyl phosphate-binding positions include 256–257 (CL) and Arg-284.

Belongs to the aspartate/ornithine carbamoyltransferase superfamily. OTCase family.

Its subcellular location is the cytoplasm. The catalysed reaction is carbamoyl phosphate + L-ornithine = L-citrulline + phosphate + H(+). The protein operates within amino-acid biosynthesis; L-arginine biosynthesis; L-arginine from L-ornithine and carbamoyl phosphate: step 1/3. In terms of biological role, reversibly catalyzes the transfer of the carbamoyl group from carbamoyl phosphate (CP) to the N(epsilon) atom of ornithine (ORN) to produce L-citrulline. The protein is Ornithine carbamoyltransferase of Methylococcus capsulatus (strain ATCC 33009 / NCIMB 11132 / Bath).